A 232-amino-acid polypeptide reads, in one-letter code: Orotidine 5'-phosphate decarboxylase (232 aa).

Substrate-binding positions include Asp-13, Lys-35, 62-71 (DLKFHDIPNT), Thr-122, Arg-182, Gln-191, Gly-211, and Arg-212. Catalysis depends on Lys-64, which acts as the Proton donor.

The protein belongs to the OMP decarboxylase family. Type 1 subfamily. In terms of assembly, homodimer.

It catalyses the reaction orotidine 5'-phosphate + H(+) = UMP + CO2. It participates in pyrimidine metabolism; UMP biosynthesis via de novo pathway; UMP from orotate: step 2/2. In terms of biological role, catalyzes the decarboxylation of orotidine 5'-monophosphate (OMP) to uridine 5'-monophosphate (UMP). The chain is Orotidine 5'-phosphate decarboxylase from Pseudomonas savastanoi pv. phaseolicola (strain 1448A / Race 6) (Pseudomonas syringae pv. phaseolicola (strain 1448A / Race 6)).